We begin with the raw amino-acid sequence, 309 residues long: Pantothenate kinase (309 aa).

92–99 is an ATP binding site; the sequence is GSVAVGKS.

Belongs to the prokaryotic pantothenate kinase family.

It localises to the cytoplasm. The catalysed reaction is (R)-pantothenate + ATP = (R)-4'-phosphopantothenate + ADP + H(+). It participates in cofactor biosynthesis; coenzyme A biosynthesis; CoA from (R)-pantothenate: step 1/5. The polypeptide is Pantothenate kinase (Latilactobacillus sakei subsp. sakei (strain 23K) (Lactobacillus sakei subsp. sakei)).